Consider the following 503-residue polypeptide: Probable cytosol aminopeptidase (503 aa).

Mn(2+) contacts are provided by K268 and D273. Residue K280 is part of the active site. D291, D350, and E352 together coordinate Mn(2+). Residue R354 is part of the active site.

The protein belongs to the peptidase M17 family. It depends on Mn(2+) as a cofactor.

It is found in the cytoplasm. The catalysed reaction is Release of an N-terminal amino acid, Xaa-|-Yaa-, in which Xaa is preferably Leu, but may be other amino acids including Pro although not Arg or Lys, and Yaa may be Pro. Amino acid amides and methyl esters are also readily hydrolyzed, but rates on arylamides are exceedingly low.. It carries out the reaction Release of an N-terminal amino acid, preferentially leucine, but not glutamic or aspartic acids.. Its function is as follows. Presumably involved in the processing and regular turnover of intracellular proteins. Catalyzes the removal of unsubstituted N-terminal amino acids from various peptides. This Methylobacterium radiotolerans (strain ATCC 27329 / DSM 1819 / JCM 2831 / NBRC 15690 / NCIMB 10815 / 0-1) protein is Probable cytosol aminopeptidase.